A 555-amino-acid chain; its full sequence is Beta-caryophyllene synthase (555 aa).

The Mg(2+) site is built by Asp-313, Asp-317, Asp-456, and Glu-464. A DDXXD motif motif is present at residues 313–317; that stretch reads DDIYD.

It belongs to the terpene synthase family. It depends on Mg(2+) as a cofactor.

It carries out the reaction (2E,6E)-farnesyl diphosphate = (+)-(E)-beta-caryophyllene + diphosphate. It functions in the pathway secondary metabolite biosynthesis; terpenoid biosynthesis. Its function is as follows. Sesquiterpene synthase converting farnesyl diphosphate to beta-caryophyllene as the major product. This Phyla dulcis (Aztec sweet herb) protein is Beta-caryophyllene synthase.